A 423-amino-acid chain; its full sequence is GTPase Obg (423 aa).

Residues M1–L158 enclose the Obg domain. The region spanning A159–A328 is the OBG-type G domain. Residues G165–S172, F190–T194, D212–G215, N281–D284, and S309–A311 contribute to the GTP site. Positions 172 and 192 each coordinate Mg(2+). The OCT domain maps to V336–E421.

This sequence belongs to the TRAFAC class OBG-HflX-like GTPase superfamily. OBG GTPase family. Monomer. Requires Mg(2+) as cofactor.

It is found in the cytoplasm. Functionally, an essential GTPase which binds GTP, GDP and possibly (p)ppGpp with moderate affinity, with high nucleotide exchange rates and a fairly low GTP hydrolysis rate. Plays a role in control of the cell cycle, stress response, ribosome biogenesis and in those bacteria that undergo differentiation, in morphogenesis control. The sequence is that of GTPase Obg from Moorella thermoacetica (strain ATCC 39073 / JCM 9320).